A 249-amino-acid polypeptide reads, in one-letter code: MSGHSKWANIKHRKAAADAKKGKLFSQLSKEIIIAAKHGGGNPETNPRLRAAIERAKEANMPKENIEKAIMRGIGAIPGVAYEEVTYEGYGPGGVAIMVEVVTDNKNRTAAEIRRIFTKHGGSLGEAGCVAWIFEDKGSIFIEKESVKDEDQLIADALEAGAEDVQISGDSVEIITSPENFSEVKNVLEEKGYKITQAEVTKVPKNVVPVDGPDAEKVLKLMEELEDHDDVQKTYANFDIPDEILQSLS.

This sequence belongs to the TACO1 family.

The protein localises to the cytoplasm. The polypeptide is Probable transcriptional regulatory protein DICTH_1505 (Dictyoglomus thermophilum (strain ATCC 35947 / DSM 3960 / H-6-12)).